The primary structure comprises 172 residues: Shikimate kinase (172 aa).

Residue 14-19 (GAGKST) coordinates ATP. Residue Ser-18 coordinates Mg(2+). 3 residues coordinate substrate: Asp-36, Arg-60, and Gly-82. Residue Arg-120 coordinates ATP. Residue Arg-140 participates in substrate binding. An ATP-binding site is contributed by Gln-157.

It belongs to the shikimate kinase family. In terms of assembly, monomer. The cofactor is Mg(2+).

It is found in the cytoplasm. It catalyses the reaction shikimate + ATP = 3-phosphoshikimate + ADP + H(+). The protein operates within metabolic intermediate biosynthesis; chorismate biosynthesis; chorismate from D-erythrose 4-phosphate and phosphoenolpyruvate: step 5/7. In terms of biological role, catalyzes the specific phosphorylation of the 3-hydroxyl group of shikimic acid using ATP as a cosubstrate. The sequence is that of Shikimate kinase from Pseudoalteromonas translucida (strain TAC 125).